Consider the following 782-residue polypeptide: Semaphorin-3G (782 aa).

Residues 1 to 22 (MAPSAWAICWLLGGLLLHGGSS) form the signal peptide. The Sema domain occupies 32–519 (RLRLSYRDLL…SRLGVAQLRL (488 aa)). A glycan (N-linked (GlcNAc...) asparagine) is linked at N44. Residues C105 and C116 are joined by a disulfide bond. N-linked (GlcNAc...) asparagine glycosylation occurs at N127. Cystine bridges form between C134–C143, C270–C382, C294–C342, C522–C540, and C603–C655. The Ig-like C2-type domain maps to 569 to 671 (PALQCLGQSQ…FSQTVVRLAL (103 aa)).

This sequence belongs to the semaphorin family.

It localises to the secreted. Functionally, has chemorepulsive activities for sympathetic axons. Ligand of NRP2. This chain is Semaphorin-3G (SEMA3G), found in Homo sapiens (Human).